The primary structure comprises 355 residues: Tetraspanin-10 (355 aa).

The segment at 1-33 is disordered; the sequence is MEEGERSPLLSQETAGQKPLSVHRPPTSGCLGP. Over 1-78 the chain is Cytoplasmic; sequence MEEGERSPLL…LSPGSSCVKY (78 aa). The helical transmembrane segment at 79 to 99 threads the bilayer; that stretch reads LIFLSNFPFSLLGLLALAIGL. Residues 100–120 lie on the Extracellular side of the membrane; that stretch reads WGLAVKGSLGSDLGGPLPTDP. A helical membrane pass occupies residues 121–141; the sequence is MLGLALGGLVVSAASLAGCLG. Residues 142–154 are Cytoplasmic-facing; that stretch reads ALCENTCLLRGFS. Residues 155–175 traverse the membrane as a helical segment; sequence GGILAFLVLEAVAGALVVALW. Topologically, residues 176–355 are extracellular; the sequence is GPLQDSLEHT…APPAAKPARG (180 aa). Cystine bridges form between Cys212–Cys279, Cys213–Cys243, Cys229–Cys237, and Cys244–Cys258. The N-linked (GlcNAc...) asparagine glycan is linked to Asn228. A disordered region spans residues 327–355; that stretch reads YGPGAHGEDRAGPQSPSPGAPPAAKPARG. Residues 341-355 show a composition bias toward pro residues; it reads SPSPGAPPAAKPARG.

It belongs to the tetraspanin (TM4SF) family. In terms of assembly, interacts with ADAM10. Expressed in the eye, including iris, ciliary body, retinal pigment epithelium, but not lens (protein level).

It localises to the cell membrane. In terms of biological role, part of TspanC8 subgroup, composed of 6 members that interact with the transmembrane metalloprotease ADAM10. This interaction is required for ADAM10 exit from the endoplasmic reticulum and for enzymatic maturation and trafficking to the cell surface as well as substrate specificity. Different TspanC8/ADAM10 complexes have distinct substrates. The sequence is that of Tetraspanin-10 from Homo sapiens (Human).